We begin with the raw amino-acid sequence, 860 residues long: Alanine--tRNA ligase (860 aa).

Positions 563, 567, 665, and 669 each coordinate Zn(2+).

This sequence belongs to the class-II aminoacyl-tRNA synthetase family. Zn(2+) serves as cofactor.

The protein resides in the cytoplasm. It catalyses the reaction tRNA(Ala) + L-alanine + ATP = L-alanyl-tRNA(Ala) + AMP + diphosphate. In terms of biological role, catalyzes the attachment of alanine to tRNA(Ala) in a two-step reaction: alanine is first activated by ATP to form Ala-AMP and then transferred to the acceptor end of tRNA(Ala). Also edits incorrectly charged Ser-tRNA(Ala) and Gly-tRNA(Ala) via its editing domain. The sequence is that of Alanine--tRNA ligase from Vibrio cholerae serotype O1 (strain ATCC 39315 / El Tor Inaba N16961).